We begin with the raw amino-acid sequence, 220 residues long: A-type ATP synthase subunit K (220 aa).

Transmembrane regions (helical) follow at residues 5 to 25 (LILG…GSGI), 63 to 83 (FLVA…AMFA), 90 to 110 (LAGL…GAVA), 125 to 145 (LPET…VGVF), 155 to 175 (AALG…GQGI), and 195 to 215 (LVLA…AILI).

Belongs to the V-ATPase proteolipid subunit family. In terms of assembly, the A-type ATPase is composed of subunits A(3), B(3), C, D, E(1 or 2), F, H(2), I and K(x). Subunit K dimerizes and may form higher oligomers.

The protein resides in the cell membrane. In terms of biological role, component of the A-type ATP synthase that produces ATP from ADP in the presence of a proton gradient across the membrane. This Methanocaldococcus jannaschii (strain ATCC 43067 / DSM 2661 / JAL-1 / JCM 10045 / NBRC 100440) (Methanococcus jannaschii) protein is A-type ATP synthase subunit K.